The primary structure comprises 315 residues: Bifunctional pinoresinol-lariciresinol reductase (315 aa).

NADP(+) contacts are provided by residues 14 to 20 (GGTGYLG), arginine 39, and lysine 48. The Proton acceptor role is filled by lysine 142. Residue arginine 146 participates in NADP(+) binding. Histidine 274 lines the substrate pocket.

It belongs to the NmrA-type oxidoreductase family. Isoflavone reductase subfamily. Dimer.

The catalysed reaction is (+)-lariciresinol + NADP(+) = (+)-pinoresinol + NADPH + H(+). It carries out the reaction (-)-secoisolariciresinol + NADP(+) = (+)-lariciresinol + NADPH + H(+). In terms of biological role, reductase involved in lignan (-)-hinokinin biosynthesis. Catalyzes the enantioselective conversion of (+)-pinoresinol into (+)-lariciresinol and of (+)-lariciresinol into (-)-secoisolariciresinol. Abstracts the 4R-hydride from the NADPH cofactor during catalysis. Has also a low phenylcoumaran benzylic ether reductase activity. The polypeptide is Bifunctional pinoresinol-lariciresinol reductase (PLR_Lc1) (Linum corymbulosum (Linum)).